A 183-amino-acid chain; its full sequence is ATP-dependent protease subunit HslV (183 aa).

Thr-13 is a catalytic residue. Na(+) contacts are provided by Gly-168, Cys-171, and Thr-174.

This sequence belongs to the peptidase T1B family. HslV subfamily. In terms of assembly, a double ring-shaped homohexamer of HslV is capped on each side by a ring-shaped HslU homohexamer. The assembly of the HslU/HslV complex is dependent on binding of ATP.

The protein resides in the cytoplasm. The catalysed reaction is ATP-dependent cleavage of peptide bonds with broad specificity.. Allosterically activated by HslU binding. Its function is as follows. Protease subunit of a proteasome-like degradation complex believed to be a general protein degrading machinery. The protein is ATP-dependent protease subunit HslV of Xanthomonas oryzae pv. oryzae (strain MAFF 311018).